The sequence spans 281 residues: Acyl-[acyl-carrier-protein]--UDP-N-acetylglucosamine O-acyltransferase (281 aa).

The protein belongs to the transferase hexapeptide repeat family. LpxA subfamily. In terms of assembly, homotrimer.

The protein resides in the cytoplasm. It catalyses the reaction a (3R)-hydroxyacyl-[ACP] + UDP-N-acetyl-alpha-D-glucosamine = a UDP-3-O-[(3R)-3-hydroxyacyl]-N-acetyl-alpha-D-glucosamine + holo-[ACP]. Its pathway is glycolipid biosynthesis; lipid IV(A) biosynthesis; lipid IV(A) from (3R)-3-hydroxytetradecanoyl-[acyl-carrier-protein] and UDP-N-acetyl-alpha-D-glucosamine: step 1/6. In terms of biological role, involved in the biosynthesis of lipid A, a phosphorylated glycolipid that anchors the lipopolysaccharide to the outer membrane of the cell. The chain is Acyl-[acyl-carrier-protein]--UDP-N-acetylglucosamine O-acyltransferase from Rickettsia bellii (strain OSU 85-389).